The sequence spans 386 residues: S-adenosylmethionine:tRNA ribosyltransferase-isomerase (386 aa).

The protein belongs to the QueA family. Monomer.

It localises to the cytoplasm. The enzyme catalyses 7-aminomethyl-7-carbaguanosine(34) in tRNA + S-adenosyl-L-methionine = epoxyqueuosine(34) in tRNA + adenine + L-methionine + 2 H(+). It participates in tRNA modification; tRNA-queuosine biosynthesis. Functionally, transfers and isomerizes the ribose moiety from AdoMet to the 7-aminomethyl group of 7-deazaguanine (preQ1-tRNA) to give epoxyqueuosine (oQ-tRNA). The chain is S-adenosylmethionine:tRNA ribosyltransferase-isomerase from Rickettsia canadensis (strain McKiel).